The primary structure comprises 587 residues: D-lactate dehydrogenase [cytochrome] 1, mitochondrial (587 aa).

Positions Ser-146–Lys-327 constitute an FAD-binding PCMH-type domain.

Belongs to the FAD-binding oxidoreductase/transferase type 4 family. Requires FAD as cofactor.

Its subcellular location is the mitochondrion inner membrane. It catalyses the reaction (R)-lactate + 2 Fe(III)-[cytochrome c] = 2 Fe(II)-[cytochrome c] + pyruvate + 2 H(+). In terms of biological role, catalyzes the stereospecific oxidation of D-lactate to pyruvate. This Saccharomyces cerevisiae (strain ATCC 204508 / S288c) (Baker's yeast) protein is D-lactate dehydrogenase [cytochrome] 1, mitochondrial.